The following is a 143-amino-acid chain: Ribosome maturation factor RimP (143 aa).

Belongs to the RimP family.

It is found in the cytoplasm. In terms of biological role, required for maturation of 30S ribosomal subunits. In Neisseria gonorrhoeae (strain ATCC 700825 / FA 1090), this protein is Ribosome maturation factor RimP.